The primary structure comprises 226 residues: Cysteine and histidine-rich domain-containing protein RAR1 (226 aa).

Zn(2+)-binding residues include cysteine 12, cysteine 17, cysteine 31, histidine 34, cysteine 49, cysteine 50, cysteine 66, and histidine 71. The CHORD 1 domain maps to 12–71; sequence CQRIGCNAMFTDDDNPQGSCQFHASGPFFHDGMKEWSCCKQRSHDFSLFLEIPGCKTGKH. The CCCH signature appears at 104–124; that stretch reads CSRCRQGFFCSDHGSQPKEQI. Zn(2+) contacts are provided by cysteine 159, cysteine 164, cysteine 178, histidine 181, cysteine 196, cysteine 197, cysteine 213, and histidine 218. The region spanning 159–218 is the CHORD 2 domain; sequence CKNKGCGQTFKERDNHETACSHHPGPAVFHDRLRGWKCCDVHVKEFDEFMEIPPCTKGWH.

In terms of assembly, interacts with HSP90-1, HSP90-2, SGT1A and SGT1B. Forms a ternary complex with SGT1A and barley HSP90.

Required specifically for plant innate immunity. Is essential for resistance conferred by multiple R genes recognizing different bacterial and oomycete pathogen isolates like avirulent P.syringae or H.parasitica (downy mildew). Contributes additively with SGT1B to RPP5-dependent resistance. Functions as a positive regulator of RPS5 accumulation by assisting its stabilization. May function as co-chaperone of HSP90-2 to positively regulate the steady-state accumulation of RPM1 and protect it from SGT1-mediated degradation. Acts as a negative regulator of pathogen-associated molecular pattern (PAMP)-triggered immunity. The chain is Cysteine and histidine-rich domain-containing protein RAR1 (RAR1) from Arabidopsis thaliana (Mouse-ear cress).